The following is a 373-amino-acid chain: Mannitol-1-phosphate 5-dehydrogenase (373 aa).

An NAD(+)-binding site is contributed by 3 to 14; it reads ALHFGAGNIGRG.

It belongs to the mannitol dehydrogenase family.

It carries out the reaction D-mannitol 1-phosphate + NAD(+) = beta-D-fructose 6-phosphate + NADH + H(+). This Bacillus pumilus (strain SAFR-032) protein is Mannitol-1-phosphate 5-dehydrogenase.